Consider the following 785-residue polypeptide: Altered inheritance of mitochondria protein 3-2 (785 aa).

3 disordered regions span residues 33–122 (TGYQ…QPYM), 142–406 (QQVA…SENL), and 418–785 (NVDV…RLHK). Residues 91–102 (GSSGNSANGSSA) show a composition bias toward low complexity. Polar residues-rich tracts occupy residues 103–122 (TIPT…QPYM) and 143–199 (QVAT…QLNI). The segment covering 249 to 260 (KPYDWEEQKTTK) has biased composition (basic and acidic residues). Polar residues-rich tracts occupy residues 283–310 (SRQG…TTTG), 350–366 (ATNN…QNTK), 375–388 (TNKS…SNVM), 395–405 (QMNTKANSSEN), and 455–465 (SSISRDNYNSI). The segment covering 478 to 497 (NTGEREGAQELKADIAERSQ) has biased composition (basic and acidic residues). Residues 527–556 (AQTSSDIPQKSSLVTDESNISVPNKSQQPM) show a composition bias toward polar residues. 2 stretches are compositionally biased toward basic and acidic residues: residues 587 to 613 (KSLE…EQLK) and 624 to 637 (KNMK…DNKN). The segment covering 659–671 (SLTSEGNHMNLNT) has biased composition (polar residues). 2 stretches are compositionally biased toward basic and acidic residues: residues 672 to 686 (EKGK…DESK) and 700 to 710 (FKREELSKEVV).

Belongs to the AIM3 family.

The protein localises to the membrane raft. This is Altered inheritance of mitochondria protein 3-2 (AIM3-2) from Candida glabrata (strain ATCC 2001 / BCRC 20586 / JCM 3761 / NBRC 0622 / NRRL Y-65 / CBS 138) (Yeast).